We begin with the raw amino-acid sequence, 853 residues long: Putative dipeptidyl aminopeptidase C14C4.15c (853 aa).

Residues M1–A26 are disordered. Topologically, residues M1 to R65 are cytoplasmic. The segment covering S15–S25 has biased composition (basic residues). A helical; Signal-anchor for type II membrane protein membrane pass occupies residues Y66–F86. Residues R87–C853 are Lumenal-facing. N-linked (GlcNAc...) asparagine glycans are attached at residues N96, N102, N472, N483, and N613. Active-site charge relay system residues include S719, D795, and H828.

The protein belongs to the peptidase S9B family.

It localises to the vacuole membrane. The protein is Putative dipeptidyl aminopeptidase C14C4.15c of Schizosaccharomyces pombe (strain 972 / ATCC 24843) (Fission yeast).